We begin with the raw amino-acid sequence, 153 residues long: Putative nuclear shuttle protein (153 aa).

This sequence belongs to the nanoviridae nuclear shuttle protein family.

The protein localises to the host nucleus. It is found in the host cytoplasm. Functionally, putative nuclear shuttle protein. This chain is Putative nuclear shuttle protein (DNA-N), found in Faba bean necrotic yellows virus (isolate Syrian SV292-88) (FBNYV).